A 123-amino-acid chain; its full sequence is Large ribosomal subunit protein bL12 (123 aa).

The protein belongs to the bacterial ribosomal protein bL12 family. Homodimer. Part of the ribosomal stalk of the 50S ribosomal subunit. Forms a multimeric L10(L12)X complex, where L10 forms an elongated spine to which 2 to 4 L12 dimers bind in a sequential fashion. Binds GTP-bound translation factors.

Its function is as follows. Forms part of the ribosomal stalk which helps the ribosome interact with GTP-bound translation factors. Is thus essential for accurate translation. In Bartonella henselae (strain ATCC 49882 / DSM 28221 / CCUG 30454 / Houston 1) (Rochalimaea henselae), this protein is Large ribosomal subunit protein bL12.